A 424-amino-acid chain; its full sequence is Protein UL117 (424 aa).

Positions Ile57–Pro82 are disordered.

This sequence belongs to the herpesviridae U84 family.

It is found in the host nucleus. Plays a role in the inhibition of host DNA replication in the infected cell. Targets the mini-chromosome maintenance (MCM) complex and blocks the accumulation of MCM proteins and their loading onto host chromatin. The polypeptide is Protein UL117 (UL117) (Human cytomegalovirus (strain AD169) (HHV-5)).